The following is a 283-amino-acid chain: Myeloid differentiation primary response protein MyD88-B (283 aa).

The 79-residue stretch at 27-105 (RLCLYLNPNA…DILTDLAPLI (79 aa)) folds into the Death domain. Positions 106-143 (EADCKKYLEKKHGPLPLQDDNVDSSEQYRITKSDDPYG) are intermediate domain. The region spanning 147-281 (ETFDAFICCC…WFWDKLAKAL (135 aa)) is the TIR domain.

Its subcellular location is the cytoplasm. In terms of biological role, adapter protein involved in the Toll-like receptor and IL-1 receptor signaling pathway in the innate immune response. Activates expression of target genes in the Spemann organizer region during early embryonic development. Is required for normal axis formation. The polypeptide is Myeloid differentiation primary response protein MyD88-B (myd88-b) (Xenopus laevis (African clawed frog)).